The primary structure comprises 418 residues: Homeobox protein H2.0 (418 aa).

Basic residues predominate over residues 190–216 (QHQKQQHQQHHHHQHHPKHLHQQHKPP). Disordered stretches follow at residues 190–223 (QHQK…STTA), 259–296 (TSPA…RKRS), and 354–418 (RENL…NVVE). Low complexity predominate over residues 259 to 273 (TSPAAAAAATSQNGA). A DNA-binding region (homeobox) is located at residues 295-354 (RSWSRAVFSNLQRKGLEIQFQQQKYITKPDRRKLAARLNLTDAQVKVWFQNRRMKWRHTR). Residues 391 to 403 (DYSSDSCSSVDLS) are compositionally biased toward low complexity.

It belongs to the H2.0 homeobox family. Expressed in cells of the visceral musculature and its anlagen.

Its subcellular location is the nucleus. In terms of biological role, may play a role in pattern formation during embryonic and imaginal development. Is not essential for visceral muscle morphogenesis. This chain is Homeobox protein H2.0 (H2.0), found in Drosophila melanogaster (Fruit fly).